A 140-amino-acid polypeptide reads, in one-letter code: Profilin (140 aa).

It belongs to the profilin family. Occurs in many kinds of cells as a complex with monomeric actin in a 1:1 ratio.

In terms of biological role, binds to actin and affects the structure of the cytoskeleton. At high concentrations, profilin prevents the polymerization of actin, whereas it enhances it at low concentrations. By binding to PIP2, it inhibits the formation of IP3 and DG. This is Profilin from Suberites domuncula (Sponge).